Reading from the N-terminus, the 165-residue chain is UPF0303 protein Bcep1808_1522 (165 aa).

This sequence belongs to the UPF0303 family.

The sequence is that of UPF0303 protein Bcep1808_1522 from Burkholderia vietnamiensis (strain G4 / LMG 22486) (Burkholderia cepacia (strain R1808)).